The following is a 592-amino-acid chain: A-type ATP synthase subunit A (592 aa).

Residue 233 to 240 participates in ATP binding; sequence GPFGSGKT.

The protein belongs to the ATPase alpha/beta chains family. In terms of assembly, has multiple subunits with at least A(3), B(3), C, D, E, F, H, I and proteolipid K(x).

It localises to the cell membrane. The enzyme catalyses ATP + H2O + 4 H(+)(in) = ADP + phosphate + 5 H(+)(out). In terms of biological role, component of the A-type ATP synthase that produces ATP from ADP in the presence of a proton gradient across the membrane. The A chain is the catalytic subunit. This is A-type ATP synthase subunit A from Saccharolobus solfataricus (strain ATCC 35092 / DSM 1617 / JCM 11322 / P2) (Sulfolobus solfataricus).